The chain runs to 634 residues: Threonine--tRNA ligase (634 aa).

Residues 1–61 (MINIRFPDGS…NSNCELRLIT (61 aa)) form the TGS domain. Residues 241 to 532 (DHRKIGKVLD…LIEHYAGNLP (292 aa)) are catalytic. The Zn(2+) site is built by Cys-332, His-383, and His-509.

Belongs to the class-II aminoacyl-tRNA synthetase family. In terms of assembly, homodimer. Zn(2+) serves as cofactor.

The protein resides in the cytoplasm. The enzyme catalyses tRNA(Thr) + L-threonine + ATP = L-threonyl-tRNA(Thr) + AMP + diphosphate + H(+). Its function is as follows. Catalyzes the attachment of threonine to tRNA(Thr) in a two-step reaction: L-threonine is first activated by ATP to form Thr-AMP and then transferred to the acceptor end of tRNA(Thr). Also edits incorrectly charged L-seryl-tRNA(Thr). This Francisella tularensis subsp. tularensis (strain FSC 198) protein is Threonine--tRNA ligase.